The following is a 395-amino-acid chain: Elongation factor Tu (395 aa).

Residues 10 to 204 (KPHLNIGTIG…AVDNWIEEPV (195 aa)) enclose the tr-type G domain. Residues 19-26 (GHVDHGKT) form a G1 region. 19 to 26 (GHVDHGKT) lines the GTP pocket. T26 is a binding site for Mg(2+). Positions 60–64 (GITIN) are G2. Positions 81–84 (DCPG) are G3. GTP is bound by residues 81 to 85 (DCPGH) and 136 to 139 (NKVD). The segment at 136–139 (NKVD) is G4. The G5 stretch occupies residues 174–176 (SAL).

Belongs to the TRAFAC class translation factor GTPase superfamily. Classic translation factor GTPase family. EF-Tu/EF-1A subfamily. Monomer.

Its subcellular location is the cytoplasm. It carries out the reaction GTP + H2O = GDP + phosphate + H(+). Functionally, GTP hydrolase that promotes the GTP-dependent binding of aminoacyl-tRNA to the A-site of ribosomes during protein biosynthesis. In Flavobacterium johnsoniae (strain ATCC 17061 / DSM 2064 / JCM 8514 / BCRC 14874 / CCUG 350202 / NBRC 14942 / NCIMB 11054 / UW101) (Cytophaga johnsonae), this protein is Elongation factor Tu.